A 187-amino-acid chain; its full sequence is UPF0301 protein YqgE (187 aa).

It belongs to the UPF0301 (AlgH) family.

This is UPF0301 protein YqgE from Salmonella paratyphi A (strain ATCC 9150 / SARB42).